Here is a 390-residue protein sequence, read N- to C-terminus: Precorrin-6Y C(5,15)-methyltransferase [decarboxylating] (390 aa).

This sequence belongs to the precorrin methyltransferase family.

It carries out the reaction precorrin-6B + 2 S-adenosyl-L-methionine = precorrin-8X + 2 S-adenosyl-L-homocysteine + CO2 + 3 H(+). Its pathway is cofactor biosynthesis; adenosylcobalamin biosynthesis; cob(II)yrinate a,c-diamide from precorrin-2 (aerobic route): step 7/10. In terms of biological role, catalyzes the methylation of both C-5 and C-15 in precorrin-6Y to form precorrin-8X. This Mycobacterium tuberculosis (strain ATCC 25618 / H37Rv) protein is Precorrin-6Y C(5,15)-methyltransferase [decarboxylating] (cobL).